Consider the following 130-residue polypeptide: ATP synthase epsilon chain (130 aa).

The protein belongs to the ATPase epsilon chain family. F-type ATPases have 2 components, CF(1) - the catalytic core - and CF(0) - the membrane proton channel. CF(1) has five subunits: alpha(3), beta(3), gamma(1), delta(1), epsilon(1). CF(0) has three main subunits: a, b and c.

It is found in the cell inner membrane. Functionally, produces ATP from ADP in the presence of a proton gradient across the membrane. In Campylobacter hominis (strain ATCC BAA-381 / DSM 21671 / CCUG 45161 / LMG 19568 / NCTC 13146 / CH001A), this protein is ATP synthase epsilon chain.